Here is a 264-residue protein sequence, read N- to C-terminus: uncharacterized protein (264 aa).

6 helical membrane-spanning segments follow: residues 23-43 (LIFL…TALI), 59-79 (FDTF…YYFL), 91-111 (LVLS…FYAL), 150-170 (FSEL…VGLL), 190-210 (AGIY…LNVW), and 233-253 (WIWS…LFVI).

The protein localises to the cell membrane. This is an uncharacterized protein from Mycoplasma genitalium (strain ATCC 33530 / DSM 19775 / NCTC 10195 / G37) (Mycoplasmoides genitalium).